A 367-amino-acid polypeptide reads, in one-letter code: Hyaluronidase (367 aa).

2 disulfides stabilise this stretch: Cys-48/Cys-337 and Cys-214/Cys-226. Asn-108 is a glycosylation site (N-linked (GlcNAc...) asparagine). The Proton donor role is filled by Glu-138. N-linked (GlcNAc...) asparagine glycosylation is present at Asn-354.

This sequence belongs to the glycosyl hydrolase 56 family.

The enzyme catalyses Random hydrolysis of (1-&gt;4)-linkages between N-acetyl-beta-D-glucosamine and D-glucuronate residues in hyaluronate.. May play a role in reproduction. In Polistes annularis (Paper wasp), this protein is Hyaluronidase.